Consider the following 556-residue polypeptide: tRNA (guanine(37)-N(1))-methyltransferase (556 aa).

Residues 1-30 constitute a mitochondrion transit peptide; it reads MIITTKALTVLPHSGLRTTHRSLLARLRHY. S-adenosyl-L-methionine-binding positions include His-249, 287 to 288, 315 to 316, and Asn-346; these read DL and DA. Disordered regions lie at residues 444-465 and 524-556; these read QHEE…KMKD and KKAA…EMQM. Basic and acidic residues-rich tracts occupy residues 454-465 and 540-549; these read EEAKRPSNKMKD and SKPDTKKIEA.

Belongs to the class I-like SAM-binding methyltransferase superfamily. TRM5/TYW2 family. In terms of assembly, monomer.

It localises to the mitochondrion matrix. The protein resides in the nucleus. The protein localises to the cytoplasm. It carries out the reaction guanosine(37) in tRNA + S-adenosyl-L-methionine = N(1)-methylguanosine(37) in tRNA + S-adenosyl-L-homocysteine + H(+). In terms of biological role, specifically methylates the N1 position of guanosine-37 in various cytoplasmic and mitochondrial tRNAs. Methylation is not dependent on the nature of the nucleoside 5' of the target nucleoside. This is the first step in the biosynthesis of wybutosine (yW), a modified base adjacent to the anticodon of tRNAs and required for accurate decoding. The protein is tRNA (guanine(37)-N(1))-methyltransferase of Anopheles gambiae (African malaria mosquito).